The chain runs to 930 residues: A disintegrin and metalloproteinase with thrombospondin motifs 5 (930 aa).

The first 16 residues, 1 to 16 (MLLGWASLLLCAFRLP), serve as a signal peptide directing secretion. The propeptide occupies 17–261 (LAAVGPAATP…PQTWWRRRRR (245 aa)). 2 disordered regions span residues 24–69 (ATPA…QRRR) and 206–231 (RASC…PSGR). Low complexity predominate over residues 31 to 42 (AGQPPTAAAAAQ). Positions 46 to 59 (RQGEEVQERAEPPG) are enriched in basic and acidic residues. Positions 207-214 (ASCETPAS) match the Cysteine switch motif. Cys-209 contacts Zn(2+). The Peptidase M12B domain occupies 267–476 (RQVELLLVAD…GHGNCLLDLP (210 aa)). Intrachain disulfides connect Cys-342/Cys-394, Cys-371/Cys-376, Cys-388/Cys-471, Cys-426/Cys-455, Cys-497/Cys-519, Cys-508/Cys-529, Cys-514/Cys-548, and Cys-542/Cys-553. His-410 lines the Zn(2+) pocket. Glu-411 is an active-site residue. Zn(2+) contacts are provided by His-414 and His-420. Residues 485-566 (ELPGQTYDAT…TKKKYYSTSS (82 aa)) enclose the Disintegrin domain. Asn-498 carries an N-linked (GlcNAc...) asparagine glycan. Residues 567–622 (HGNWGSWGSWGQCSRSCGGGVQFAYRHCNNPAPRNNGRYCTGKRAIYRSCSLMPCP) form the TSP type-1 1 domain. C-linked (Man) tryptophan glycans are attached at residues Trp-570 and Trp-573. 3 disulfides stabilise this stretch: Cys-579–Cys-616, Cys-583–Cys-621, and Cys-594–Cys-606. Ser-582 carries O-linked (Fuc...) serine glycosylation. N-linked (GlcNAc...) asparagine glycans are attached at residues Asn-728, Asn-802, and Asn-807. Residues 732–874 (TKIVGTFNKK…HGSNKVGSHT (143 aa)) form a spacer region. One can recognise a TSP type-1 2 domain in the interval 875-929 (SQPQWVTGPWLACSRTCDTGWHTRTVQCQDGNRKLAKGCPLSQRPSAFKQCLLKK).

The cofactor is Zn(2+). Post-translationally, the precursor is cleaved by furin and PCSK7 outside of the cell. Glycosylated. Can be O-fucosylated by POFUT2 on a serine or a threonine residue found within the consensus sequence C1-X(2)-(S/T)-C2-G of the TSP type-1 repeat domains where C1 and C2 are the first and second cysteine residue of the repeat, respectively. Fucosylated repeats can then be further glycosylated by the addition of a beta-1,3-glucose residue by the glucosyltransferase, B3GALTL. Fucosylation mediates the efficient secretion of ADAMTS family members. Can also be C-glycosylated with one or two mannose molecules on tryptophan residues within the consensus sequence W-X-X-W of the TPRs, and N-glycosylated. These other glycosylations can also facilitate secretion. Expressed at low level in placenta primarily but also detected in heart and brain, cervix, uterus, bladder, esophagus, rib cartilage, chondroblastoma, fibrous tissue and a joint capsule from an arthritic patient.

The protein localises to the secreted. It localises to the extracellular space. Its subcellular location is the extracellular matrix. Metalloproteinase that plays an important role in connective tissue organization, development, inflammation and cell migration. Extracellular matrix (ECM) degrading enzyme that show proteolytic activity toward the hyalectan group of chondroitin sulfate proteoglycans (CSPGs) including ACAN, VCAN, BCAN and NCAN. Cleavage within the hyalectans occurs at Glu-Xaa recognition motifs. Plays a role in embryonic development, including limb and cardiac morphogenesis, and skeletal muscle development through its VCAN remodeling properties. Cleaves VCAN in the pericellular matrix surrounding myoblasts, facilitating myoblast contact and fusion which is required for skeletal muscle development and regeneration. Participates in development of brown adipose tissue and browning of white adipose tissue. Plays an important role for T-lymphocyte migration from draining lymph nodes following viral infection. This is A disintegrin and metalloproteinase with thrombospondin motifs 5 (ADAMTS5) from Homo sapiens (Human).